Consider the following 408-residue polypeptide: Zinc chaperone AztD (408 aa).

Positions Met1–Ala21 are cleaved as a signal peptide. The N-terminal Zn(2+)-binding motif; binds a third Zn(2+) with low affinity signature appears at Asp23–Glu29. Zn(2+) is bound by residues His99, His102, Asp104, His124, His167, His218, and His408. A disulfide bridge connects residues Cys214 and Cys231.

In terms of assembly, monomer.

The protein localises to the periplasm. Acts as a zinc chaperone in the AztABCD zinc transport system. Directly transfers one zinc cation to the solute binding protein AztC; the transfer occurs without the formation of a stable interaction. Binds 3 Zn(2+), two with high affinity and one with low affinity, and transfers only Zn(2+) bound to site 2 to AztC. Likely functions to store zinc in the periplasm and may be important for zinc accumulation in zinc-limited environments. The protein is Zinc chaperone AztD of Paracoccus denitrificans (strain Pd 1222).